A 224-amino-acid chain; its full sequence is Cytidylate kinase (224 aa).

Residue 11-19 coordinates ATP; that stretch reads GPAGAGKST.

This sequence belongs to the cytidylate kinase family. Type 1 subfamily.

The protein localises to the cytoplasm. The catalysed reaction is CMP + ATP = CDP + ADP. It carries out the reaction dCMP + ATP = dCDP + ADP. The sequence is that of Cytidylate kinase from Exiguobacterium sp. (strain ATCC BAA-1283 / AT1b).